A 576-amino-acid chain; its full sequence is Putative diflavin flavoprotein A 1 (576 aa).

Residues 48–240 (RNGTTYNSFL…LAIKTVATGH (193 aa)) form a zinc metallo-hydrolase region. The Fe cation site is built by His-97, Glu-99, Asp-101, His-164, Asp-183, and His-240. In terms of domain architecture, Flavodoxin-like spans 269-431 (VALFYAEDYG…DLEKALGRIS (163 aa)). Residues 432–576 (TGLYIITTKK…VHHRKVGNHY (145 aa)) are flavodoxin-reductase-like.

This sequence in the N-terminal section; belongs to the zinc metallo-hydrolase group 3 family. In the C-terminal section; belongs to the flavodoxin reductase family. It depends on Fe cation as a cofactor.

Its function is as follows. Mediates electron transfer from NADH to oxygen, reducing it to water. This modular protein has 3 redox cofactors, in other organisms the same activity requires 2 or 3 proteins. The chain is Putative diflavin flavoprotein A 1 (dfa1) from Nostoc sp. (strain PCC 7120 / SAG 25.82 / UTEX 2576).